A 132-amino-acid chain; its full sequence is Fatty acid-binding protein, intestinal (132 aa).

Alanine 2 carries the N-acetylalanine modification. Tryptophan 83 and arginine 107 together coordinate hexadecanoate. Tryptophan 83 and arginine 107 together coordinate tetradecanoate.

Belongs to the calycin superfamily. Fatty-acid binding protein (FABP) family.

It is found in the cytoplasm. Functionally, FABPs are thought to play a role in the intracellular transport of long-chain fatty acids and their acyl-CoA esters. FABP2 is probably involved in triglyceride-rich lipoprotein synthesis. Binds saturated long-chain fatty acids with a high affinity, but binds with a lower affinity to unsaturated long-chain fatty acids. FABP2 may also help maintain energy homeostasis by functioning as a lipid sensor. This Sus scrofa (Pig) protein is Fatty acid-binding protein, intestinal (FABP2).